Consider the following 183-residue polypeptide: Endoribonuclease YbeY (183 aa).

The Zn(2+) site is built by histidine 143, histidine 147, and histidine 153.

Belongs to the endoribonuclease YbeY family. The cofactor is Zn(2+).

The protein localises to the cytoplasm. Functionally, single strand-specific metallo-endoribonuclease involved in late-stage 70S ribosome quality control and in maturation of the 3' terminus of the 16S rRNA. In Rickettsia bellii (strain RML369-C), this protein is Endoribonuclease YbeY.